Here is a 238-residue protein sequence, read N- to C-terminus: Ion-translocating oxidoreductase complex subunit E (238 aa).

5 helical membrane-spanning segments follow: residues 41-61 (LGLG…VSLV), 71-91 (LPAF…LMQA), 95-115 (ELYQ…VILG), 130-150 (SFDG…LGGL), and 184-204 (GFLL…LIAL).

The protein belongs to the NqrDE/RnfAE family. The complex is composed of six subunits: RnfA, RnfB, RnfC, RnfD, RnfE and RnfG.

Its subcellular location is the cell inner membrane. Part of a membrane-bound complex that couples electron transfer with translocation of ions across the membrane. This Pseudomonas aeruginosa (strain UCBPP-PA14) protein is Ion-translocating oxidoreductase complex subunit E.